The primary structure comprises 453 residues: MKLGIVAFTLISFAAQALALVARENLPKPQNDPFYQPPDGWESKKVGTILRSRKVNINTLVKDNLKEAWQLLYRTTYRSDDEPTTTVTTIMVPHNAQNDSLVLYADFEDAGAPQCAPSYTWRAGLLSDTSSIFNVGIAMLYLQEGYIVTMPDKEGNKGAFGSGHVEGRQSLDGIRATLAFDKIGLNKNARVVGHGYSGGGIQCGWTAALKKSYAPEINSVGWFTGGTPSNVTALVEKINGGPFAGYVAGGLGGVISTYPDVKAYTDKVFTKQAQKDLEFPRKHCQEEITLHFLFKNFYDKSFSTVGKRFLYEPVVQKALNELTMGTNPDFTPDTPVLMAHGVSDEVAPYEAAHETYKSWCKNGADVEFVSFANPVSAHGVTTVTSTVPGFLWNRDRLQGKPVQGGCREIKNYDVGVNSHALGEDFESALGLLKGLLGDKIGPNDEYLKDALHK.

A signal peptide spans Met1–Ala19. An N-linked (GlcNAc...) asparagine glycan is attached at Asn98. Cys115 and Cys284 are oxidised to a cystine. Catalysis depends on Ser197, which acts as the Nucleophile. N-linked (GlcNAc...) asparagine glycosylation occurs at Asn230. Active-site residues include Asp344 and His378. A disulfide bridge connects residues Cys360 and Cys406.

Belongs to the AB hydrolase superfamily. Lipase family. Class Lip subfamily.

The protein localises to the secreted. It is found in the cell wall. The catalysed reaction is a triacylglycerol + H2O = a diacylglycerol + a fatty acid + H(+). It catalyses the reaction a monoacylglycerol + H2O = glycerol + a fatty acid + H(+). The enzyme catalyses a diacylglycerol + H2O = a monoacylglycerol + a fatty acid + H(+). Functionally, secreted lipase involved in Dandruff and seborrheic dermatitis (D/SD) probably via lipase-mediated breakdown of sebaceous lipids and release of irritating free fatty acids. Has triacylglycerol lipase activity and is able to hydrolyze triolein, tristearin, trilinolein, tripalmitoylglycerol and trihexadecenoin. Hydrolyzes diacylglycerols such as distearin, dilinolein, dipalmitoylglycerol and dipalmitolein. Mostly converts monoolein to di- and triolein, while free fatty acids are only produced in low amounts. In Malassezia globosa (strain ATCC MYA-4612 / CBS 7966) (Dandruff-associated fungus), this protein is Secreted triacylglycerol lipase LIP3.